The following is a 118-amino-acid chain: Protein Rev (118 aa).

Ser-5 and Ser-8 each carry phosphoserine; by host CK2. Residues 18–26 are homomultimerization; sequence LIKFLYQSN. Residues 23–46 are disordered; it reads YQSNPPPSPEGTRQARRNRRRRWR. The Nuclear localization signal and RNA-binding (RRE) motif lies at 34 to 50; it reads TRQARRNRRRRWRARQR. Basic residues predominate over residues 36–46; it reads QARRNRRRRWR. The Nuclear export signal and binding to XPO1 signature appears at 73–84; the sequence is LQLPPLERLNLN. Residues 87-118 form a disordered region; that stretch reads EDCRTSGTQGVGHPQISVESPTVLESGTEEQC. Ser-92 is modified (phosphoserine; by host). Over residues 103–112 the composition is skewed to polar residues; it reads SVESPTVLES.

It belongs to the HIV-1 REV protein family. In terms of assembly, homomultimer; when bound to the RRE. Multimeric assembly is essential for activity and may involve XPO1. Binds to human KPNB1, XPO1, TNPO1, RANBP5 and IPO7. Interacts with the viral Integrase. Interacts with human KHDRBS1. Interacts with human NAP1; this interaction decreases Rev multimerization and stimulates its activity. Interacts with human DEAD-box helicases DDX3 and DDX24; these interactions may serve for viral RNA export to the cytoplasm and packaging, respectively. Interacts with human PSIP1; this interaction may inhibit HIV-1 DNA integration by promoting dissociation of the Integrase-LEDGF/p75 complex. Post-translationally, asymmetrically arginine dimethylated at one site by host PRMT6. Methylation impairs the RNA-binding activity and export of viral RNA from the nucleus to the cytoplasm. Phosphorylated by protein kinase CK2. Presence of, and maybe binding to the N-terminus of the regulatory beta subunit of CK2 is necessary for CK2-mediated Rev's phosphorylation.

It localises to the host nucleus. It is found in the host nucleolus. The protein resides in the host cytoplasm. In terms of biological role, escorts unspliced or incompletely spliced viral pre-mRNAs (late transcripts) out of the nucleus of infected cells. These pre-mRNAs carry a recognition sequence called Rev responsive element (RRE) located in the env gene, that is not present in fully spliced viral mRNAs (early transcripts). This function is essential since most viral proteins are translated from unspliced or partially spliced pre-mRNAs which cannot exit the nucleus by the pathway used by fully processed cellular mRNAs. Rev itself is translated from a fully spliced mRNA that readily exits the nucleus. Rev's nuclear localization signal (NLS) binds directly to KPNB1/Importin beta-1 without previous binding to KPNA1/Importin alpha-1. KPNB1 binds to the GDP bound form of RAN (Ran-GDP) and targets Rev to the nucleus. In the nucleus, the conversion from Ran-GDP to Ran-GTP dissociates Rev from KPNB1 and allows Rev's binding to the RRE in viral pre-mRNAs. Rev multimerization on the RRE via cooperative assembly exposes its nuclear export signal (NES) to the surface. Rev can then form a complex with XPO1/CRM1 and Ran-GTP, leading to nuclear export of the complex. Conversion from Ran-GTP to Ran-GDP mediates dissociation of the Rev/RRE/XPO1/RAN complex, so that Rev can return to the nucleus for a subsequent round of export. Beside KPNB1, also seems to interact with TNPO1/Transportin-1, RANBP5/IPO5 and IPO7/RANBP7 for nuclear import. The nucleoporin-like HRB/RIP is an essential cofactor that probably indirectly interacts with Rev to release HIV RNAs from the perinuclear region to the cytoplasm. The sequence is that of Protein Rev from Human immunodeficiency virus type 1 group M subtype D (isolate ELI) (HIV-1).